Reading from the N-terminus, the 156-residue chain is Regulatory protein RecX (156 aa).

It belongs to the RecX family.

The protein localises to the cytoplasm. Its function is as follows. Modulates RecA activity. In Pseudomonas putida (strain W619), this protein is Regulatory protein RecX.